The sequence spans 312 residues: Ribosomal RNA small subunit methyltransferase H (312 aa).

S-adenosyl-L-methionine is bound by residues 35–37, Asp55, Phe79, Asp101, and Gln108; that span reads GGH.

This sequence belongs to the methyltransferase superfamily. RsmH family.

It localises to the cytoplasm. It catalyses the reaction cytidine(1402) in 16S rRNA + S-adenosyl-L-methionine = N(4)-methylcytidine(1402) in 16S rRNA + S-adenosyl-L-homocysteine + H(+). Specifically methylates the N4 position of cytidine in position 1402 (C1402) of 16S rRNA. This is Ribosomal RNA small subunit methyltransferase H from Glaesserella parasuis serovar 5 (strain SH0165) (Haemophilus parasuis).